A 244-amino-acid chain; its full sequence is Methylthioribulose-1-phosphate dehydratase (244 aa).

Cys89 provides a ligand contact to substrate. Residues His107 and His109 each coordinate Zn(2+). Residue Glu130 is the Proton donor/acceptor of the active site. Zn(2+) is bound at residue His192.

The protein belongs to the aldolase class II family. MtnB subfamily. Zn(2+) is required as a cofactor.

It localises to the cytoplasm. The enzyme catalyses 5-(methylsulfanyl)-D-ribulose 1-phosphate = 5-methylsulfanyl-2,3-dioxopentyl phosphate + H2O. The protein operates within amino-acid biosynthesis; L-methionine biosynthesis via salvage pathway; L-methionine from S-methyl-5-thio-alpha-D-ribose 1-phosphate: step 2/6. Catalyzes the dehydration of methylthioribulose-1-phosphate (MTRu-1-P) into 2,3-diketo-5-methylthiopentyl-1-phosphate (DK-MTP-1-P). The polypeptide is Methylthioribulose-1-phosphate dehydratase (Saccharomyces cerevisiae (strain AWRI1631) (Baker's yeast)).